The following is a 169-amino-acid chain: uncharacterized protein (169 aa).

The segment covering 144–157 has biased composition (low complexity); it reads AEAHSASPASSDSS. Residues 144–169 form a disordered region; it reads AEAHSASPASSDSSPLTNNIRPISIM. Residues 158–169 show a composition bias toward polar residues; the sequence is PLTNNIRPISIM.

This is an uncharacterized protein from Saccharomyces cerevisiae (strain ATCC 204508 / S288c) (Baker's yeast).